The chain runs to 391 residues: Probable sugar efflux transporter (391 aa).

The next 12 membrane-spanning stretches (helical) occupy residues 16 to 36 (VFVF…PVAL), 51 to 71 (VGLM…PLML), 82 to 102 (LLFL…AWNF), 110 to 130 (MGIA…VIRV), 138 to 158 (QALG…LPLG), 170 to 190 (TFGV…KLLP), 210 to 230 (PLLM…FTTY), 247 to 267 (ITTL…FLFS), 277 to 297 (FIAF…VFKN), 300 to 320 (WVIF…TIAL), 338 to 358 (IFSG…SIVI), and 361 to 381 (LGLE…LFWL).

The protein belongs to the major facilitator superfamily. SotB (TC 2.A.1.2) family.

It localises to the cell inner membrane. Its function is as follows. Involved in the efflux of sugars. The physiological role may be the reduction of the intracellular concentration of toxic sugars or sugar metabolites. The protein is Probable sugar efflux transporter of Helicobacter pylori (strain HPAG1).